The sequence spans 25 residues: AEIDFSGIPEDIIKEIKETNAKPPA.

The tract at residues 1–25 is disordered; sequence AEIDFSGIPEDIIKEIKETNAKPPA. Phosphoserine is present on S6. The span at 11–25 shows a compositional bias: basic and acidic residues; it reads DIIKEIKETNAKPPA.

The protein belongs to the non-disulfide-bridged peptide (NDBP) superfamily. In terms of tissue distribution, expressed by the venom gland.

The protein resides in the secreted. Functionally, agonist of the B2 bradykinin receptor (BDKRB2). Potentiates the hypotensive effect of bradykinin (BK) and induces a direct vasorelaxing effect, independently of BK, by endothelium- and nitric oxide (NO)-dependent mechanisms in rat aortic ring preparations. Does not inhibit the angiotensin-converting enzyme (ACE). Also exerts proangiogenic, antiinflammatory, and antifibrogenic activities. Does not inhibit the angiotensin-converting enzyme (ACE) but weakly increases its activity, and weakly inhibits neprilysin (NEP) in a non-competitive manner. Exerts intermediate cytotoxicity and pro-inflammatory effects on mouse macrophages, and increases the phagocytic activity of these murine cells. In terms of biological role, presents weak hemolytic activity at physiological concentrations (micromolar range), and weak lactate dehydrogenase (LDH) release from mast cells. Does not induce mast cell degranulation, and antimicrobial effects. In vivo, causes intense pain (but no edema formation), when injected in mice hind paws. Also induces discomfort and anxiety in mice, as it moderately diminishes locomotion and moderately increases rearing behavior. This Tityus serrulatus (Brazilian scorpion) protein is Hypotensin-2.